The sequence spans 499 residues: Glycerol kinase (499 aa).

An ADP-binding site is contributed by Thr13. Residues Thr13, Thr14, and Ser15 each contribute to the ATP site. Thr13 lines the sn-glycerol 3-phosphate pocket. Residue Arg17 coordinates ADP. Sn-glycerol 3-phosphate is bound by residues Arg83, Glu84, Tyr135, and Asp245. Positions 83, 84, 135, 245, and 246 each coordinate glycerol. ADP contacts are provided by Thr267 and Gly310. ATP-binding residues include Thr267, Gly310, Gln314, and Gly411. Positions 411 and 415 each coordinate ADP.

It belongs to the FGGY kinase family.

It carries out the reaction glycerol + ATP = sn-glycerol 3-phosphate + ADP + H(+). The protein operates within polyol metabolism; glycerol degradation via glycerol kinase pathway; sn-glycerol 3-phosphate from glycerol: step 1/1. Its activity is regulated as follows. Inhibited by fructose 1,6-bisphosphate (FBP). Functionally, key enzyme in the regulation of glycerol uptake and metabolism. Catalyzes the phosphorylation of glycerol to yield sn-glycerol 3-phosphate. This chain is Glycerol kinase, found in Stenotrophomonas maltophilia (strain K279a).